The following is a 254-amino-acid chain: Phosphoglycerate mutase 1 (254 aa).

Substrate contacts are provided by residues 10–17 (RHGESAWN) and 23–24 (SG). The active-site Tele-phosphohistidine intermediate is the His11. Ser14 and Ser23 each carry phosphoserine. Tyr26 is modified (phosphotyrosine). Phosphoserine is present on Ser31. Residues Arg62, 89–92 (ERHY), and Lys100 each bind substrate. Residue Glu89 is the Proton donor/acceptor of the active site. Lys106 bears the N6-acetyllysine mark. Position 116 to 117 (116 to 117 (RR)) interacts with substrate. A Phosphoserine modification is found at Ser118. Substrate is bound at residue 187–188 (GN). The residue at position 251 (Lys251) is an N6-acetyllysine; alternate. Residue Lys251 is modified to N6-succinyllysine; alternate. N6-acetyllysine is present on residues Lys253 and Lys254.

It belongs to the phosphoglycerate mutase family. BPG-dependent PGAM subfamily. In terms of assembly, homodimer. Post-translationally, acetylated at Lys-253, Lys-253 and Lys-254 under high glucose condition. Acetylation increases catalytic activity. Under glucose restriction SIRT1 levels dramatically increase and it deacetylates the enzyme.

The catalysed reaction is (2R)-2-phosphoglycerate = (2R)-3-phosphoglycerate. It carries out the reaction (2R)-3-phospho-glyceroyl phosphate = (2R)-2,3-bisphosphoglycerate + H(+). Its function is as follows. Catalyzes the interconversion of 2-phosphoglycerate and 3-phosphoglyceratea crucial step in glycolysis, by using 2,3-bisphosphoglycerate. Also catalyzes the interconversion of (2R)-2,3-bisphosphoglycerate and (2R)-3-phospho-glyceroyl phosphate. This chain is Phosphoglycerate mutase 1, found in Mus musculus (Mouse).